A 308-amino-acid polypeptide reads, in one-letter code: uncharacterized protein (308 aa).

The ABC transporter domain occupies 5 to 236 (LELQQLKKTY…LKSETFILDL (232 aa)). 38-45 (GPNGAGKS) provides a ligand contact to ATP.

The protein belongs to the ABC transporter superfamily.

This is an uncharacterized protein from Escherichia coli (strain K12).